The following is a 424-amino-acid chain: UPF0761 membrane protein Smal_0716 (424 aa).

A run of 6 helical transmembrane segments spans residues 48–68 (VFAL…FPVF), 101–121 (SAGQ…LITL), 144–164 (FLVY…SLAV), 181–201 (WLAD…CITL), 216–236 (AVPG…GIGA), and 251–271 (VAFV…VLLG).

It belongs to the UPF0761 family.

It is found in the cell inner membrane. This Stenotrophomonas maltophilia (strain R551-3) protein is UPF0761 membrane protein Smal_0716.